Reading from the N-terminus, the 310-residue chain is Homoserine kinase (310 aa).

Position 91–101 (91–101 (PLARGLGSSAA)) interacts with ATP.

The protein belongs to the GHMP kinase family. Homoserine kinase subfamily.

It localises to the cytoplasm. It carries out the reaction L-homoserine + ATP = O-phospho-L-homoserine + ADP + H(+). It functions in the pathway amino-acid biosynthesis; L-threonine biosynthesis; L-threonine from L-aspartate: step 4/5. Its function is as follows. Catalyzes the ATP-dependent phosphorylation of L-homoserine to L-homoserine phosphate. This Bacillus pumilus (strain SAFR-032) protein is Homoserine kinase.